The following is a 183-amino-acid chain: UPF0398 protein MCCL_1095 (183 aa).

Belongs to the UPF0398 family.

This is UPF0398 protein MCCL_1095 from Macrococcus caseolyticus (strain JCSC5402) (Macrococcoides caseolyticum).